Consider the following 225-residue polypeptide: Translation initiation factor 6 (225 aa).

This sequence belongs to the eIF-6 family.

In terms of biological role, binds to the 50S ribosomal subunit and prevents its association with the 30S ribosomal subunit to form the 70S initiation complex. This is Translation initiation factor 6 from Hyperthermus butylicus (strain DSM 5456 / JCM 9403 / PLM1-5).